A 574-amino-acid chain; its full sequence is MKLSLVPIFALLSTAFALPVENAERDVPIEERAAAPTVTIASPAATIIGGAGATVETFAGVPFAKPPVGALRLKPPQPITSALGTIKATAQAASCPQFFFSTTINDAIPTSALGLLLNTPVFQQVLNAGEDCLYLNIQRPVGTTASSKLPVLFWIFGGGFELGGTAMYDGSSWVAESIAEGKPIIFVQVAYRVGGFGFLPGAEILADGSANLGLLDQRLGLQWVADNIAAFGGDPSKVTIWGESAGAISVFDQMALYGGDNTYKGKSLFRGAIMNSGSIVPADPVDCPKGQIIYDNVVASAGCSAAANTLTCLRGVPYSTLLNATNSVPGLLSYSSIALSYLPRPDGTALTKSPDLLLASGNWAKVPFIIGDQEDEGTIFALFQSNISTTAQLTTYFSDFFFHNAPTSVLTGLLNTYPNDLISGSPFRTLLLNNWYPQFKRLAAILGDLTFTLTRRVFLKTALKVAPTVPSWSYLSSYDYGTPVLGTFHGSDILQVFNGIKPNYAASASKAYYLSFVNTLDPNNGTSSAYANWPQYSNGAQLLNLYASFGGFISDNFRSTSYDYIVANLPSFYI.

A signal peptide spans 1–17 (MKLSLVPIFALLSTAFA). Cys-95 and Cys-132 form a disulfide bridge. The active-site Acyl-ester intermediate is the Ser-244. Cysteines 303 and 312 form a disulfide. Asn-323 carries an N-linked (GlcNAc...) asparagine glycan. Glu-376 acts as the Charge relay system in catalysis. N-linked (GlcNAc...) asparagine glycosylation is present at Asn-386. His-489 acts as the Charge relay system in catalysis. The N-linked (GlcNAc...) asparagine glycan is linked to Asn-524.

It belongs to the type-B carboxylesterase/lipase family.

The protein resides in the secreted. It catalyses the reaction a carboxylic ester + H2O = an alcohol + a carboxylate + H(+). Its function is as follows. Secreted lipase that allows the use of hydrolyzed lipids as carbon sources. Has highest activity with methyl umbelliferyl oleate (C18:1), whereas much lower activities are obtained with the respective esters of palmitate (C16:0) and stearate (C18:0) (24% and 12% of the activity obtained with umbelliferyl oleate, respectively). Hydrolyzes 1- and 3-positioned ester bonds in preference to 2-positioned ester bonds. The production rate of monoglycerides is lower than that of diacylglycerides. Seems not required for the penetration of intact host tissue. The sequence is that of Secreted lipase 1 from Botryotinia fuckeliana (strain B05.10) (Noble rot fungus).